Consider the following 371-residue polypeptide: Flagellar P-ring protein (371 aa).

Residues 1-28 form the signal peptide; that stretch reads MPARPTPPAVPLALALAAALAAPAPAAA.

It belongs to the FlgI family. The basal body constitutes a major portion of the flagellar organelle and consists of four rings (L,P,S, and M) mounted on a central rod.

The protein resides in the periplasm. The protein localises to the bacterial flagellum basal body. Its function is as follows. Assembles around the rod to form the L-ring and probably protects the motor/basal body from shearing forces during rotation. The protein is Flagellar P-ring protein of Anaeromyxobacter dehalogenans (strain 2CP-C).